A 310-amino-acid polypeptide reads, in one-letter code: Pantothenate kinase (310 aa).

95-102 (GSVAVGKS) is an ATP binding site.

The protein belongs to the prokaryotic pantothenate kinase family.

It localises to the cytoplasm. It carries out the reaction (R)-pantothenate + ATP = (R)-4'-phosphopantothenate + ADP + H(+). It participates in cofactor biosynthesis; coenzyme A biosynthesis; CoA from (R)-pantothenate: step 1/5. This is Pantothenate kinase from Rhodococcus opacus (strain B4).